Here is a 149-residue protein sequence, read N- to C-terminus: Probable flagellum biosynthesis repressor protein FlbT (149 aa).

This sequence belongs to the FlbT family.

In terms of biological role, has a post-transcriptional repressor function in flagellum biogenesis. Associates with the 5'-UTR of fljK mRNA and promotes its degradation. In Rhizobium leguminosarum bv. trifolii (strain WSM2304), this protein is Probable flagellum biosynthesis repressor protein FlbT.